We begin with the raw amino-acid sequence, 517 residues long: Quinol oxidase subunit 1 (517 aa).

Transmembrane regions (helical) follow at residues 19-39, 64-84, 98-118, 150-170, 185-205, 226-246, 271-291, 303-323, 333-353, 369-389, 412-432, and 460-480; these read VVWLYTIGSIFWLGVLGIAAM, IHGWAAMIAFVPMAAAAVIGF, QMAIFFWLSNVLLGIAMAGSP, MAYLVMSIAVILQTAAFVTLI, IFAAYGVAFSIVIAVTLPALA, WAILFWFYGHPVVYYVPFPLF, IYLLAIGTMGVWVHHLQTWPL, TLILATGSGLTVLNLGLTIFT, VGMGALISLIGFILAGAQALV, VVGHFHLMIWTLIIMGYTTVF, IGMIWWTAPFMGVGYAMSVAG, and IGIPGLLLTLFVGMFDALAYA. Histidine 65 is a Fe(II)-heme a binding site. Cu cation contacts are provided by histidine 235, tyrosine 239, histidine 284, and histidine 285. Positions 235-239 form a cross-link, 1'-histidyl-3'-tyrosine (His-Tyr); it reads HPVVY. Histidine 372 lines the heme a3 pocket. A Fe(II)-heme a-binding site is contributed by histidine 374.

This sequence belongs to the heme-copper respiratory oxidase family.

The protein resides in the cell membrane. It carries out the reaction 2 a quinol + O2 = 2 a quinone + 2 H2O. In terms of biological role, catalyzes the reduction of oxygen to water. Subunits I, II and III form the functional core of the enzyme complex. Electrons originating in caldariella quinol are transferred to the binuclear center formed by heme A3 and Cu(B). Its function is as follows. Subunit I binds heme a and the bimetallic center. In Sulfolobus acidocaldarius (strain ATCC 33909 / DSM 639 / JCM 8929 / NBRC 15157 / NCIMB 11770), this protein is Quinol oxidase subunit 1 (soxB).